We begin with the raw amino-acid sequence, 1007 residues long: Rho-type GTPase-activating protein 1 (1007 aa).

LIM zinc-binding domains lie at 13-66 (CVRC…CFDC) and 70-122 (CKNC…CLSC). Disordered regions lie at residues 203 to 293 (ITGY…KSPS), 401 to 478 (EKYS…STSL), and 505 to 600 (KETA…NDPS). The span at 212-221 (NSGSSKFGSN) shows a compositional bias: low complexity. Composition is skewed to polar residues over residues 250–261 (ANMSLNVATDPT) and 270–293 (HSRN…KSPS). The residue at position 278 (Thr-278) is a Phosphothreonine. Residue Ser-291 is modified to Phosphoserine. A compositionally biased stretch (basic residues) spans 411–421 (KGRKISRSLSR). Residues 454 to 466 (RSQDLMRDNDSHT) are compositionally biased toward basic and acidic residues. Composition is skewed to polar residues over residues 467–478 (GLDTPNSNSTSL) and 529–579 (SPAT…LENS). Phosphothreonine is present on Thr-532. Residues 583–600 (EEQKETLYENSESRNDPS) show a composition bias toward basic and acidic residues. Positions 791–1006 (SSLVARCNYE…FIFGNYKDIL (216 aa)) constitute a Rho-GAP domain.

In terms of biological role, GTPase-activating protein (GAP) for CDC42 and/or RHO1. Negative regulator of the pheromone-response pathway through the STE20 protein kinase; acts at a step between the G-protein and the MAP kinase module. Dominant suppressor of bud emergence defect caused by deletion of IPL2/BEM2. Involved in the control of polarized cell growth and proper bud site selection. The sequence is that of Rho-type GTPase-activating protein 1 (RGA1) from Saccharomyces cerevisiae (strain ATCC 204508 / S288c) (Baker's yeast).